A 371-amino-acid polypeptide reads, in one-letter code: Protein STRICTOSIDINE SYNTHASE-LIKE 6 (371 aa).

The N-terminal stretch at 1–21 is a signal peptide; sequence MPVFLSSRFLFFCIIVPLLIS. N101 and N137 each carry an N-linked (GlcNAc...) asparagine glycan. Y303 carries the phosphotyrosine modification.

It belongs to the strictosidine synthase family.

Its subcellular location is the vacuole. This chain is Protein STRICTOSIDINE SYNTHASE-LIKE 6, found in Arabidopsis thaliana (Mouse-ear cress).